The primary structure comprises 269 residues: Integral membrane protein 2C (269 aa).

Thr39 carries the post-translational modification Phosphothreonine. Residues 57–77 (VGGVCYLSMGMVVLLMGLVFA) form a helical; Signal-anchor for type II membrane protein membrane-spanning segment. One can recognise a BRICHOS domain in the interval 138-232 (FGGGDPADII…LCNGKDTYRL (95 aa)). A disulfide bond links Cys165 and Cys224. Asn171 is a glycosylation site (N-linked (GlcNAc...) asparagine).

The protein belongs to the ITM2 family. In terms of assembly, interacts with BACE1. Interacts with APP. Interacts with STMN2. In terms of processing, type I membrane-bound, as well as soluble, furin has a pre-eminent role in ITM2C proteolytic processing. PCSK7 and PCSK5 may also be involved although to a lesser extent. The soluble form of PCSK7 is incapable of processing ITM2C. Fails to undergo shedding by ADAM10 and intramembrane cleavage by SPPL2B.

It is found in the lysosome membrane. It localises to the cell membrane. Its function is as follows. Negative regulator of amyloid-beta peptide production. May inhibit the processing of APP by blocking its access to alpha- and beta-secretase. Binding to the beta-secretase-cleaved APP C-terminal fragment is negligible, suggesting that ITM2C is a poor gamma-secretase cleavage inhibitor. May play a role in TNF-induced cell death and neuronal differentiation. The polypeptide is Integral membrane protein 2C (Itm2c) (Rattus norvegicus (Rat)).